A 230-amino-acid polypeptide reads, in one-letter code: Dephospho-CoA kinase (230 aa).

The segment at 1–20 (MSKYAAIPSPYSHQPQAPDH) is disordered. The 200-residue stretch at 26–225 (VVGLTGGIGS…QDYLKLAQQL (200 aa)) folds into the DPCK domain. 34-39 (GSGKSA) contacts ATP.

This sequence belongs to the CoaE family.

Its subcellular location is the cytoplasm. The enzyme catalyses 3'-dephospho-CoA + ATP = ADP + CoA + H(+). It participates in cofactor biosynthesis; coenzyme A biosynthesis; CoA from (R)-pantothenate: step 5/5. Functionally, catalyzes the phosphorylation of the 3'-hydroxyl group of dephosphocoenzyme A to form coenzyme A. The polypeptide is Dephospho-CoA kinase (Psychrobacter arcticus (strain DSM 17307 / VKM B-2377 / 273-4)).